The sequence spans 222 residues: DUF1769 family protein (222 aa).

The protein belongs to the UPF0590 family.

The protein resides in the cytoplasm. The protein localises to the nucleus. The sequence is that of DUF1769 family protein from Schizosaccharomyces pombe (strain 972 / ATCC 24843) (Fission yeast).